The primary structure comprises 457 residues: Chromosomal replication initiator protein DnaA (457 aa).

Residues M1–F75 form a domain I, interacts with DnaA modulators region. The interval F75 to A118 is domain II. The interval E87–G108 is disordered. Positions N91–T103 are enriched in basic and acidic residues. Positions T119–S335 are domain III, AAA+ region. The ATP site is built by G163, G165, K166, and T167. Residues S336 to K457 are domain IV, binds dsDNA.

Belongs to the DnaA family. In terms of assembly, oligomerizes as a right-handed, spiral filament on DNA at oriC.

The protein localises to the cytoplasm. Its function is as follows. Plays an essential role in the initiation and regulation of chromosomal replication. ATP-DnaA binds to the origin of replication (oriC) to initiate formation of the DNA replication initiation complex once per cell cycle. Binds the DnaA box (a 9 base pair repeat at the origin) and separates the double-stranded (ds)DNA. Forms a right-handed helical filament on oriC DNA; dsDNA binds to the exterior of the filament while single-stranded (ss)DNA is stabiized in the filament's interior. The ATP-DnaA-oriC complex binds and stabilizes one strand of the AT-rich DNA unwinding element (DUE), permitting loading of DNA polymerase. After initiation quickly degrades to an ADP-DnaA complex that is not apt for DNA replication. Binds acidic phospholipids. In Clostridium perfringens (strain SM101 / Type A), this protein is Chromosomal replication initiator protein DnaA.